Here is a 208-residue protein sequence, read N- to C-terminus: ER membrane protein complex subunit 9 (208 aa).

The MPN domain maps to Val4–Arg139.

It belongs to the EMC8/EMC9 family. As to quaternary structure, component of the ER membrane protein complex (EMC). EMC8 and EMC9 are mutually exclusive subunits of the EMC complex.

The protein localises to the endoplasmic reticulum membrane. In terms of biological role, part of the endoplasmic reticulum membrane protein complex (EMC) that enables the energy-independent insertion into endoplasmic reticulum membranes of newly synthesized membrane proteins. Preferentially accommodates proteins with transmembrane domains that are weakly hydrophobic or contain destabilizing features such as charged and aromatic residues. Involved in the cotranslational insertion of multi-pass membrane proteins in which stop-transfer membrane-anchor sequences become ER membrane spanning helices. It is also required for the post-translational insertion of tail-anchored/TA proteins in endoplasmic reticulum membranes. By mediating the proper cotranslational insertion of N-terminal transmembrane domains in an N-exo topology, with translocated N-terminus in the lumen of the ER, controls the topology of multi-pass membrane proteins like the G protein-coupled receptors. By regulating the insertion of various proteins in membranes, it is indirectly involved in many cellular processes. The protein is ER membrane protein complex subunit 9 (EMC9) of Homo sapiens (Human).